Consider the following 179-residue polypeptide: MASQNRDPAATSVAAARKGAEPSGGAARGPVGKRLQQELMTLMMSGDKGISAFPESDNLFKWVGTIHGAAGTVYEDLRYKLSLEFPSGYPYNAPTVKFLTPCYHPNVDTQGNICLDILKEKWSALYDVRTILLSIQSLLGEPNIDSPLNTHAAELWKNPTAFKKYLQETYSKQVTSQEP.

The segment at 1–31 (MASQNRDPAATSVAAARKGAEPSGGAARGPV) is disordered. Alanine 2 is modified (N-acetylalanine). The residue at position 3 (serine 3) is a Phosphoserine. Residues 30–175 (PVGKRLQQEL…LQETYSKQVT (146 aa)) enclose the UBC core domain. Residue cysteine 114 is the Glycyl thioester intermediate of the active site.

This sequence belongs to the ubiquitin-conjugating enzyme family. Component of the APC/C complex, composed of at least 14 distinct subunits that assemble into a complex of at least 19 chains with a combined molecular mass of around 1.2 MDa. Within this complex, directly interacts with ANAPC2. Autoubiquitinated by the APC/C complex, leading to its degradation by the proteasome. Its degradation plays a central role in APC/C regulation, allowing cyclin-A accumulation before S phase entry. APC/C substrates inhibit the autoubiquitination of UBE2C/UBCH10 but not its E2 function, hence APC/C remaining active until its substrates have been destroyed.

It catalyses the reaction S-ubiquitinyl-[E1 ubiquitin-activating enzyme]-L-cysteine + [E2 ubiquitin-conjugating enzyme]-L-cysteine = [E1 ubiquitin-activating enzyme]-L-cysteine + S-ubiquitinyl-[E2 ubiquitin-conjugating enzyme]-L-cysteine.. The catalysed reaction is S-ubiquitinyl-[E1 ubiquitin-activating enzyme]-L-cysteine + [acceptor protein]-L-lysine = [E1 ubiquitin-activating enzyme]-L-cysteine + N(6)-monoubiquitinyl-[acceptor protein]-L-lysine.. It participates in protein modification; protein ubiquitination. Its function is as follows. Accepts ubiquitin from the E1 complex and catalyzes its covalent attachment to other proteins. In vitro catalyzes 'Lys-11'- and 'Lys-48'-linked polyubiquitination. Acts as an essential factor of the anaphase promoting complex/cyclosome (APC/C), a cell cycle-regulated ubiquitin ligase that controls progression through mitosis. Acts by initiating 'Lys-11'-linked polyubiquitin chains on APC/C substrates, leading to the degradation of APC/C substrates by the proteasome and promoting mitotic exit. This chain is Ubiquitin-conjugating enzyme E2 C (UBE2C), found in Homo sapiens (Human).